The chain runs to 215 residues: HTH-type transcriptional repressor FabR (215 aa).

The 61-residue stretch at 10 to 70 (KTRRSLVEAA…TMVDESGLML (61 aa)) folds into the HTH tetR-type domain. The H-T-H motif DNA-binding region spans 33 to 52 (SLREVAREAGIAPTSFYRHF).

In terms of assembly, homodimer.

It is found in the cytoplasm. Functionally, represses the transcription of fabB, involved in unsaturated fatty acid (UFA) biosynthesis. By controlling UFA production, FabR directly influences the physical properties of the membrane bilayer. This chain is HTH-type transcriptional repressor FabR, found in Escherichia coli O1:K1 / APEC.